The sequence spans 135 residues: Fatty acid-binding protein 5 (135 aa).

N-acetylalanine is present on Ala2. Position 3 is a phosphoserine (Ser3). The short motif at 24-34 is the Nuclear localization signal element; the sequence is KELGVGLALRK. Cys43 and Arg109 together coordinate N-eicosanoyl ethanolamine. A disulfide bridge links Cys120 with Cys127. 129–131 is a binding site for (9Z,12Z)-octadecadienoate; sequence RVY. Tyr131 is a binding site for N-eicosanoyl ethanolamine. Tyr131 is a binding site for hexadecanoate. Tyr131 bears the Phosphotyrosine mark.

This sequence belongs to the calycin superfamily. Fatty-acid binding protein (FABP) family. As to quaternary structure, monomer.

The protein resides in the cytoplasm. It localises to the nucleus. The protein localises to the synapse. Its subcellular location is the postsynaptic density. It is found in the secreted. It catalyses the reaction hexadecanoate(out) = hexadecanoate(in). The enzyme catalyses (9Z,12Z)-octadecadienoate(out) = (9Z,12Z)-octadecadienoate(in). The catalysed reaction is (9Z)-octadecenoate(out) = (9Z)-octadecenoate(in). Its function is as follows. Intracellular carrier for long-chain fatty acids and related active lipids, such as endocannabinoids, that regulate the metabolism and actions of the ligands they bind. In addition to the cytosolic transport, selectively delivers specific fatty acids from the cytosol to the nucleus, wherein they activate nuclear receptors. Delivers retinoic acid to the nuclear receptor peroxisome proliferator-activated receptor delta; which promotes proliferation and survival. May also serve as a synaptic carrier of endocannabinoid at central synapses and thus controls retrograde endocannabinoid signaling. Modulates inflammation by regulating PTGES induction via NF-kappa-B activation, and prostaglandin E2 (PGE2) biosynthesis during inflammation. The polypeptide is Fatty acid-binding protein 5 (Rattus norvegicus (Rat)).